Here is a 511-residue protein sequence, read N- to C-terminus: MASDSSFPGASSNVAEYSVSEISGALKRTVEDTFGHVRVRGEISGYRGPHSSGHAYFALKDDRARLEAVIWRGSMSRLRFRPEEGMEVIATGKLTTYPGSSKYQIVIEQMEPAGAGALMALLEERKQRLAAEGLFDPALKQLLPFMPRVIGVVTSPTGAVIRDIIHRISDRYPLRVIVWPVRVQGDTCGPEVATAVNGFNTLPDDGPIPRPDVLIVARGGGSLEDLWGFNDEIVVRAVAASHIPVISAVGHETDWTLIDLAADMRAPTPTGAAEMAVPVKADLQASLASQSARLSSAMSRFFDQKRQAHRAAARAMPSADQLLALPRRRFDEAASRLTRALFVNTQKKRVHFDGHARQLSPRLLQRRLVELERGVTMLGQRLPRALEAFLRERRTAFTHRANRLSPEPILRRTRLTGSTLEQLDRRRDQAVRLLIERVKRRSQELDRLMRTLSYESVLERGFAVVFDAQGKPVKQAAAVSPGDALSVRFRDGDVGVVARAGLTIPDPTKGQ.

Belongs to the XseA family. Heterooligomer composed of large and small subunits.

The protein resides in the cytoplasm. The enzyme catalyses Exonucleolytic cleavage in either 5'- to 3'- or 3'- to 5'-direction to yield nucleoside 5'-phosphates.. Its function is as follows. Bidirectionally degrades single-stranded DNA into large acid-insoluble oligonucleotides, which are then degraded further into small acid-soluble oligonucleotides. This Brucella melitensis biotype 1 (strain ATCC 23456 / CCUG 17765 / NCTC 10094 / 16M) protein is Exodeoxyribonuclease 7 large subunit.